Consider the following 93-residue polypeptide: Small ribosomal subunit protein uS19 (93 aa).

Belongs to the universal ribosomal protein uS19 family.

Functionally, protein S19 forms a complex with S13 that binds strongly to the 16S ribosomal RNA. The chain is Small ribosomal subunit protein uS19 from Lacticaseibacillus paracasei (strain ATCC 334 / BCRC 17002 / CCUG 31169 / CIP 107868 / KCTC 3260 / NRRL B-441) (Lactobacillus paracasei).